The chain runs to 338 residues: MAELKPFLAKVANREVLTRDEARQAFDILMSGEATPSQIGAFLMALRVRGETVDEIVGAVTAMRAKMLPVEAPADAIDIVGTGGDGFGTYNISTLAAFIVAGAGVPVAKHGNRAQSSKAGTADTQSVLGIKLDIGPEVIARCIREAGIGFMFAQLHHSSMRHVGPSRVELGTRTIFNLLGPLANPAGARRQLLGVFAPQWVVPLAEVLKDLNAESVWVVHGNGLDEITTTGTTSVAALEDGKIRTFELTPADFGLAHADLADLKGGDGIANAAALRAVLSGEKNAYRDISLANAAASLVIAGKAETLHDGMKLAAQSLDSGATAAALEKLIAVSNDEE.

Residues G81, 84 to 85 (GD), T89, 91 to 94 (NIST), 109 to 117 (KHGNRAQSS), and T121 each bind 5-phospho-alpha-D-ribose 1-diphosphate. Residue G81 participates in anthranilate binding. Position 93 (S93) interacts with Mg(2+). N112 lines the anthranilate pocket. R167 contributes to the anthranilate binding site. Positions 225 and 226 each coordinate Mg(2+).

This sequence belongs to the anthranilate phosphoribosyltransferase family. Homodimer. The cofactor is Mg(2+).

It carries out the reaction N-(5-phospho-beta-D-ribosyl)anthranilate + diphosphate = 5-phospho-alpha-D-ribose 1-diphosphate + anthranilate. Its pathway is amino-acid biosynthesis; L-tryptophan biosynthesis; L-tryptophan from chorismate: step 2/5. Functionally, catalyzes the transfer of the phosphoribosyl group of 5-phosphorylribose-1-pyrophosphate (PRPP) to anthranilate to yield N-(5'-phosphoribosyl)-anthranilate (PRA). This Rhizobium rhizogenes (strain K84 / ATCC BAA-868) (Agrobacterium radiobacter) protein is Anthranilate phosphoribosyltransferase.